Consider the following 232-residue polypeptide: Lipopolysaccharide core heptose(II) kinase WaaY (232 aa).

It belongs to the protein kinase superfamily. RfaY/WaaY family.

It catalyses the reaction alpha-D-Glc-(1-&gt;3)-[L-alpha-D-Hep-(1-&gt;7)]-L-alpha-D-Hep-(1-&gt;3)-4-O-PO3(2-)-L-alpha-D-Hep-(1-&gt;5)-[alpha-Kdo-(2-&gt;4)]-alpha-Kdo-(2-&gt;6)-lipid A + ATP = alpha-D-Glc-(1-&gt;3)-[L-alpha-D-Hep-(1-&gt;7)]-4-O-PO3(2-)-L-alpha-D-Hep-(1-&gt;3)-4-O-PO3(2-)-L-alpha-D-Hep-(1-&gt;5)-[alpha-Kdo-(2-&gt;4)]-alpha-Kdo-(2-&gt;6)-lipid A + ADP + H(+). Its pathway is bacterial outer membrane biogenesis; LPS core biosynthesis. Kinase involved in the biosynthesis of the core oligosaccharide region of lipopolysaccharide (LPS). Catalyzes the phosphorylation of the second heptose unit (HepII) of the inner core. This Escherichia coli (strain K12) protein is Lipopolysaccharide core heptose(II) kinase WaaY.